Here is a 230-residue protein sequence, read N- to C-terminus: Large ribosomal subunit protein uL1 (230 aa).

The protein belongs to the universal ribosomal protein uL1 family. Part of the 50S ribosomal subunit.

In terms of biological role, binds directly to 23S rRNA. The L1 stalk is quite mobile in the ribosome, and is involved in E site tRNA release. Functionally, protein L1 is also a translational repressor protein, it controls the translation of the L11 operon by binding to its mRNA. The polypeptide is Large ribosomal subunit protein uL1 (Rhodopseudomonas palustris (strain BisA53)).